Here is a 260-residue protein sequence, read N- to C-terminus: tRNA pseudouridine synthase A (260 aa).

The Nucleophile role is filled by Asp52. Substrate is bound at residue Tyr111.

Belongs to the tRNA pseudouridine synthase TruA family. In terms of assembly, homodimer.

The enzyme catalyses uridine(38/39/40) in tRNA = pseudouridine(38/39/40) in tRNA. In terms of biological role, formation of pseudouridine at positions 38, 39 and 40 in the anticodon stem and loop of transfer RNAs. The chain is tRNA pseudouridine synthase A from Beijerinckia indica subsp. indica (strain ATCC 9039 / DSM 1715 / NCIMB 8712).